The sequence spans 425 residues: Enolase (425 aa).

A (2R)-2-phosphoglycerate-binding site is contributed by glutamine 161. Catalysis depends on glutamate 203, which acts as the Proton donor. Residues aspartate 240, glutamate 283, and aspartate 310 each contribute to the Mg(2+) site. The (2R)-2-phosphoglycerate site is built by lysine 335, arginine 364, serine 365, and lysine 386. Lysine 335 acts as the Proton acceptor in catalysis.

The protein belongs to the enolase family. In terms of assembly, component of the RNA degradosome, a multiprotein complex involved in RNA processing and mRNA degradation. It depends on Mg(2+) as a cofactor.

It is found in the cytoplasm. The protein localises to the secreted. The protein resides in the cell surface. The enzyme catalyses (2R)-2-phosphoglycerate = phosphoenolpyruvate + H2O. It participates in carbohydrate degradation; glycolysis; pyruvate from D-glyceraldehyde 3-phosphate: step 4/5. Functionally, catalyzes the reversible conversion of 2-phosphoglycerate (2-PG) into phosphoenolpyruvate (PEP). It is essential for the degradation of carbohydrates via glycolysis. This Ruthia magnifica subsp. Calyptogena magnifica protein is Enolase.